The chain runs to 254 residues: Ribonuclease HII (254 aa).

Positions 70-254 (QAIAGIDEVG…TFEPVKSMLG (185 aa)) constitute an RNase H type-2 domain. 3 residues coordinate a divalent metal cation: Asp76, Glu77, and Asp168.

The protein belongs to the RNase HII family. It depends on Mn(2+) as a cofactor. Mg(2+) is required as a cofactor.

Its subcellular location is the cytoplasm. The catalysed reaction is Endonucleolytic cleavage to 5'-phosphomonoester.. Its function is as follows. Endonuclease that specifically degrades the RNA of RNA-DNA hybrids. This chain is Ribonuclease HII, found in Streptococcus gordonii (strain Challis / ATCC 35105 / BCRC 15272 / CH1 / DL1 / V288).